A 404-amino-acid polypeptide reads, in one-letter code: Multidrug resistance protein MdtG (404 aa).

The next 11 membrane-spanning stretches (helical) occupy residues 19–39 (LGCF…PLYV), 56–76 (LVFS…GGLA), 90–110 (LGMA…QFLI), 113–133 (ALLG…ATQA), 144–164 (TLST…GLLA), 171–191 (PVFF…FFFI), 222–242 (LFVT…ILTL), 254–274 (IAFI…LSAP), 288–308 (ILIV…FVQT), 317–337 (FLLG…LVYN), and 376–396 (AVFC…WNSL).

It belongs to the major facilitator superfamily. DHA1 family. MdtG (TC 2.A.1.2.20) subfamily.

It localises to the cell inner membrane. This Salmonella paratyphi A (strain ATCC 9150 / SARB42) protein is Multidrug resistance protein MdtG.